Consider the following 208-residue polypeptide: Large ribosomal subunit protein uL4 (208 aa).

Belongs to the universal ribosomal protein uL4 family. In terms of assembly, part of the 50S ribosomal subunit.

In terms of biological role, one of the primary rRNA binding proteins, this protein initially binds near the 5'-end of the 23S rRNA. It is important during the early stages of 50S assembly. It makes multiple contacts with different domains of the 23S rRNA in the assembled 50S subunit and ribosome. Its function is as follows. Forms part of the polypeptide exit tunnel. The polypeptide is Large ribosomal subunit protein uL4 (Solibacter usitatus (strain Ellin6076)).